A 394-amino-acid chain; its full sequence is uncharacterized protein (394 aa).

11 helical membrane-spanning segments follow: residues 10 to 30 (PALI…NYYA), 50 to 70 (FIVT…VPLG), 79 to 99 (IVSM…SQSL), 100 to 120 (AMMI…QILV), 138 to 158 (TIMS…GLLA), 166 to 186 (VFWV…RGLP), 218 to 238 (LLGC…AFLL), 243 to 263 (FNYS…GALG), 291 to 311 (WLAI…ILVL), 337 to 357 (LTAG…LISA), and 364 to 384 (GWAG…LVWW).

The protein belongs to the major facilitator superfamily.

It is found in the cell inner membrane. This is an uncharacterized protein from Escherichia coli (strain K12).